A 92-amino-acid polypeptide reads, in one-letter code: Exodeoxyribonuclease 7 small subunit (92 aa).

Over residues 71–84 the composition is skewed to low complexity; sequence AESAGTAKSAVAAD. Positions 71 to 92 are disordered; sequence AESAGTAKSAVAADSRGAADSA.

Belongs to the XseB family. Heterooligomer composed of large and small subunits.

It is found in the cytoplasm. It carries out the reaction Exonucleolytic cleavage in either 5'- to 3'- or 3'- to 5'-direction to yield nucleoside 5'-phosphates.. Functionally, bidirectionally degrades single-stranded DNA into large acid-insoluble oligonucleotides, which are then degraded further into small acid-soluble oligonucleotides. In Leifsonia xyli subsp. xyli (strain CTCB07), this protein is Exodeoxyribonuclease 7 small subunit.